The primary structure comprises 109 residues: U4-lycotoxin-Ls1d (109 aa).

Residues 1–22 (MKVLVLFSVLFLTLFSYSSTEA) form the signal peptide. The propeptide occupies 23-44 (MDEFDSDAEEDMLSLMANEQVR). Positions 45-88 (AKACTPRLHDCSHDRHSCCRGELFKDVCYCFYPEGEDKTEVCSC) are knottin domain. Disulfide bonds link Cys48-Cys63, Cys55-Cys72, Cys62-Cys88, and Cys74-Cys86. Residues 89–108 (QQPKSHKYIEKVVDKARTVV) form a linear cationic cytotoxin domain region.

This sequence belongs to the neurotoxin 19 (CSTX) family. 05 (U4-Lctx) subfamily. In terms of tissue distribution, expressed by the venom gland.

It is found in the secreted. In terms of biological role, enhances the high-affinity desensitization of human P2RX3 purinoceptors. The sequence is that of U4-lycotoxin-Ls1d from Lycosa singoriensis (Wolf spider).